The sequence spans 363 residues: MSHRDHGADGWESADFPITCESCFGDNPYMRMTRADYDKECKICSRPFTAFRWRPGRNARFKKTEICQTCSKLKNVCQVCLLDLGFGLPVQVRDSALNINSHYSVPMSHVNREYFADEHDPKTRAGLDYESSFGKMQPNDTILKLQRRTPSYEKNRPKICSFYTIGQCKRGAECSFRHEMPETGELSHQNIRDRYYSVNDPVAMKLLRKAGEMGTLEPPEDESIKTLYVGGLNSRIFEQDIHDHFYAYGEMESIRVMAEDGKYDQSGSNQQQQGSIAHTGLISQQQNQHSQMQQYYMQPPPPNEYSHYPSMDTQRMGAAFSTQESDGSSTSENNRAYSSYSYPMPPHQPYPTPPPYIDIYIYI.

Residues 154 to 181 (KNRPKICSFYTIGQCKRGAECSFRHEMP) form a C3H1-type zinc finger. Residues 225-310 (KTLYVGGLNS…PPNEYSHYPS (86 aa)) form the RRM domain. The tract at residues 281 to 348 (LISQQQNQHS…SYSYPMPPHQ (68 aa)) is disordered. Low complexity predominate over residues 283–297 (SQQQNQHSQMQQYYM). Polar residues predominate over residues 320 to 336 (FSTQESDGSSTSENNRA).

The sequence is that of Zinc finger CCCH domain-containing protein 53 from Arabidopsis thaliana (Mouse-ear cress).